The following is a 527-amino-acid chain: GMP synthase [glutamine-hydrolyzing] (527 aa).

Residues threonine 13–lysine 202 form the Glutamine amidotransferase type-1 domain. Cysteine 89 serves as the catalytic Nucleophile. Catalysis depends on residues histidine 176 and glutamate 178. Positions tryptophan 203–arginine 402 constitute a GMPS ATP-PPase domain. Serine 231–threonine 237 is an ATP binding site. Arginine 304, aspartate 464, lysine 519, and glutamate 525 together coordinate XMP.

Homodimer. Requires Mg(2+) as cofactor.

It localises to the cytoplasm. Its subcellular location is the cytosol. It carries out the reaction XMP + L-glutamine + ATP + H2O = GMP + L-glutamate + AMP + diphosphate + 2 H(+). It functions in the pathway purine metabolism; GMP biosynthesis; GMP from XMP (L-Gln route): step 1/1. Catalyzes the conversion of xanthine monophosphate (XMP) to GMP in the presence of glutamine and ATP through an adenyl-XMP intermediate. The protein is GMP synthase [glutamine-hydrolyzing] (GUA1) of Yarrowia lipolytica (strain CLIB 122 / E 150) (Yeast).